A 264-amino-acid chain; its full sequence is MKQYLDLMKKVLEEGTPKADRTGTGTRSIFGHQMRFNLQDGFPLVTTKKCHLRSIIHELLWFLNGDTNVAYLNENKVSIWDEWADENGDLGPVYGKQWRSWGAADGRQIDQLKNVLTQLRQDPDSRRIIVSAWNVGELDKMALAPCHAFFQFYVADGKLSCQLYQRSCDIFLGLPFNIASYALLVHMVAQQCDLDVGDFVWTGGDTHLYNNHMEQTHLQLSREPRALPKLVIKRRPDTLFDYRFEDFEIEGYDPHPAIKAPVAI.

Position 21 (Arg21) interacts with dUMP. His51 is a (6R)-5,10-methylene-5,6,7,8-tetrahydrofolate binding site. 126 to 127 (RR) provides a ligand contact to dUMP. Cys146 acts as the Nucleophile in catalysis. DUMP-binding positions include 166 to 169 (RSCD), Asn177, and 207 to 209 (HLY). Asp169 provides a ligand contact to (6R)-5,10-methylene-5,6,7,8-tetrahydrofolate. Ala263 lines the (6R)-5,10-methylene-5,6,7,8-tetrahydrofolate pocket.

It belongs to the thymidylate synthase family. Bacterial-type ThyA subfamily. In terms of assembly, homodimer.

It is found in the cytoplasm. It carries out the reaction dUMP + (6R)-5,10-methylene-5,6,7,8-tetrahydrofolate = 7,8-dihydrofolate + dTMP. It functions in the pathway pyrimidine metabolism; dTTP biosynthesis. In terms of biological role, catalyzes the reductive methylation of 2'-deoxyuridine-5'-monophosphate (dUMP) to 2'-deoxythymidine-5'-monophosphate (dTMP) while utilizing 5,10-methylenetetrahydrofolate (mTHF) as the methyl donor and reductant in the reaction, yielding dihydrofolate (DHF) as a by-product. This enzymatic reaction provides an intracellular de novo source of dTMP, an essential precursor for DNA biosynthesis. The chain is Thymidylate synthase from Pectobacterium atrosepticum (strain SCRI 1043 / ATCC BAA-672) (Erwinia carotovora subsp. atroseptica).